A 219-amino-acid chain; its full sequence is Cytidylate kinase (219 aa).

21–29 serves as a coordination point for ATP; it reads GPAASGKGT.

This sequence belongs to the cytidylate kinase family. Type 1 subfamily.

The protein localises to the cytoplasm. It catalyses the reaction CMP + ATP = CDP + ADP. The catalysed reaction is dCMP + ATP = dCDP + ADP. The polypeptide is Cytidylate kinase (Rickettsia akari (strain Hartford)).